Reading from the N-terminus, the 651-residue chain is Probable ATP-dependent helicase MJ0942 (651 aa).

A Helicase ATP-binding domain is found at 6-255; that stretch reads YIKEKFPYPK…EIIEKYLTSR (250 aa). Residue 41 to 48 participates in ATP binding; it reads APTGVGKT. The [4Fe-4S] cluster site is built by C102, C149, and C154. Positions 195–198 match the DEAH box motif; that stretch reads DEAH. Positions 449–638 constitute a Helicase C-terminal domain; sequence NLLKILEAIN…NYEVMSLDMA (190 aa).

The protein belongs to the helicase family. DinG subfamily. [4Fe-4S] cluster is required as a cofactor.

It carries out the reaction Couples ATP hydrolysis with the unwinding of duplex DNA at the replication fork by translocating in the 5'-3' direction. This creates two antiparallel DNA single strands (ssDNA). The leading ssDNA polymer is the template for DNA polymerase III holoenzyme which synthesizes a continuous strand.. The enzyme catalyses ATP + H2O = ADP + phosphate + H(+). Its function is as follows. Might be a 5'-3' DNA helicase. The polypeptide is Probable ATP-dependent helicase MJ0942 (Methanocaldococcus jannaschii (strain ATCC 43067 / DSM 2661 / JAL-1 / JCM 10045 / NBRC 100440) (Methanococcus jannaschii)).